We begin with the raw amino-acid sequence, 72 residues long: Translation initiation factor IF-1 (72 aa).

An S1-like domain is found at 1 to 72; sequence MAKDGVIEVE…NRGRITYRYK (72 aa).

Belongs to the IF-1 family. Component of the 30S ribosomal translation pre-initiation complex which assembles on the 30S ribosome in the order IF-2 and IF-3, IF-1 and N-formylmethionyl-tRNA(fMet); mRNA recruitment can occur at any time during PIC assembly.

It localises to the cytoplasm. Functionally, one of the essential components for the initiation of protein synthesis. Stabilizes the binding of IF-2 and IF-3 on the 30S subunit to which N-formylmethionyl-tRNA(fMet) subsequently binds. Helps modulate mRNA selection, yielding the 30S pre-initiation complex (PIC). Upon addition of the 50S ribosomal subunit IF-1, IF-2 and IF-3 are released leaving the mature 70S translation initiation complex. This Bifidobacterium adolescentis (strain ATCC 15703 / DSM 20083 / NCTC 11814 / E194a) protein is Translation initiation factor IF-1.